The following is a 573-amino-acid chain: Membrane protein insertase YidC (573 aa).

A run of 6 helical transmembrane segments spans residues 6–26 (VFLIFAWLMVAALLWMEWGKD), 355–375 (FSIMAIIGQGLFWVLSHLHSF), 379–399 (WGWAIIGLVVLLRLALYPLSA), 446–466 (GGCLPLLIQMPIFFALYWVLV), 488–508 (PYFILPVLNIAIMWATQKLTP), and 524–544 (PLVFGVMMAFMPAGLVLYWVV).

It belongs to the OXA1/ALB3/YidC family. Type 1 subfamily. Interacts with the Sec translocase complex via SecD. Specifically interacts with transmembrane segments of nascent integral membrane proteins during membrane integration.

Its subcellular location is the cell inner membrane. In terms of biological role, required for the insertion and/or proper folding and/or complex formation of integral membrane proteins into the membrane. Involved in integration of membrane proteins that insert both dependently and independently of the Sec translocase complex, as well as at least some lipoproteins. Aids folding of multispanning membrane proteins. The protein is Membrane protein insertase YidC of Xanthomonas campestris pv. campestris (strain ATCC 33913 / DSM 3586 / NCPPB 528 / LMG 568 / P 25).